A 212-amino-acid polypeptide reads, in one-letter code: Methylthioribulose-1-phosphate dehydratase (212 aa).

2 residues coordinate Zn(2+): H97 and H99.

The protein belongs to the aldolase class II family. MtnB subfamily. Homotetramer. The cofactor is Zn(2+).

The enzyme catalyses 5-(methylsulfanyl)-D-ribulose 1-phosphate = 5-methylsulfanyl-2,3-dioxopentyl phosphate + H2O. It functions in the pathway amino-acid biosynthesis; L-methionine biosynthesis via salvage pathway; L-methionine from S-methyl-5-thio-alpha-D-ribose 1-phosphate: step 2/6. Functionally, catalyzes the dehydration of methylthioribulose-1-phosphate (MTRu-1-P) into 2,3-diketo-5-methylthiopentyl-1-phosphate (DK-MTP-1-P). This chain is Methylthioribulose-1-phosphate dehydratase, found in Bacillus cereus (strain ATCC 10987 / NRS 248).